We begin with the raw amino-acid sequence, 95 residues long: Citrate lyase acyl carrier protein (95 aa).

Serine 14 is subject to O-(phosphoribosyl dephospho-coenzyme A)serine.

It belongs to the CitD family. In terms of assembly, oligomer with a subunit composition of (alpha,beta,gamma)6.

It localises to the cytoplasm. Covalent carrier of the coenzyme of citrate lyase. The sequence is that of Citrate lyase acyl carrier protein from Haemophilus influenzae (strain ATCC 51907 / DSM 11121 / KW20 / Rd).